Here is an 806-residue protein sequence, read N- to C-terminus: Phenylalanine--tRNA ligase beta subunit (806 aa).

Positions 40-155 (NKGVKGVVVG…SDAEVGADAL (116 aa)) constitute a tRNA-binding domain. Residues 409 to 484 (VQERTVSVTA…RLYGYDHIPV (76 aa)) enclose the B5 domain. Mg(2+) is bound by residues D462, D468, E471, and E472. Residues 712 to 805 (PRFPSMTRDM…VEEKFGAELR (94 aa)) enclose the FDX-ACB domain.

This sequence belongs to the phenylalanyl-tRNA synthetase beta subunit family. Type 1 subfamily. Tetramer of two alpha and two beta subunits. It depends on Mg(2+) as a cofactor.

It localises to the cytoplasm. It carries out the reaction tRNA(Phe) + L-phenylalanine + ATP = L-phenylalanyl-tRNA(Phe) + AMP + diphosphate + H(+). This is Phenylalanine--tRNA ligase beta subunit from Bacillus thuringiensis subsp. konkukian (strain 97-27).